Reading from the N-terminus, the 201-residue chain is NADH-ubiquinone oxidoreductase chain 6 (201 aa).

Transmembrane regions (helical) follow at residues 4–24 (LVLF…VISV), 28–48 (VFSV…LLLL), 55–75 (LLFL…VVMI), 88–108 (FYYA…IFII), and 151–171 (LFIL…ILTL).

The protein belongs to the complex I subunit 6 family.

It localises to the mitochondrion membrane. It catalyses the reaction a ubiquinone + NADH + 5 H(+)(in) = a ubiquinol + NAD(+) + 4 H(+)(out). Core subunit of the mitochondrial membrane respiratory chain NADH dehydrogenase (Complex I) that is believed to belong to the minimal assembly required for catalysis. Complex I functions in the transfer of electrons from NADH to the respiratory chain. The immediate electron acceptor for the enzyme is believed to be ubiquinone. The chain is NADH-ubiquinone oxidoreductase chain 6 (ND6) from Cyanidium caldarium (Red alga).